A 646-amino-acid polypeptide reads, in one-letter code: Nucleoside triphosphatase I (646 aa).

The region spanning 48-213 is the Helicase ATP-binding domain; sequence FIGLKNLNSM…NNLIGLLRPN (166 aa). Residue 61–68 participates in ATP binding; that stretch reads WDTGMGKT. The DEXH box signature appears at 151–154; the sequence is DEVH. The Helicase C-terminal domain maps to 377-540; that stretch reads YIEACRIILN…KINVVFDLLK (164 aa). The interval 466-532 is binding to the cap-specific mRNA (nucleoside-2'-O-)-methyltransferase; the sequence is DIIILDMPWN…DIIKDKQSKI (67 aa).

Belongs to the helicase family. NPH I subfamily. In terms of assembly, monomer. Interacts (via C-terminus) with RAP94 (via N-terminus). Interacts with the cap-specific mRNA (nucleoside-2'-O-)-methyltransferase.

It is found in the virion. The enzyme catalyses a ribonucleoside 5'-triphosphate + H2O = a ribonucleoside 5'-diphosphate + phosphate + H(+). DNA-dependent ATPase required for providing the needed energy to achieve the termination of early transcripts. Acts in concert with the RAP94 subunit of the virion RNA polymerase and the capping enzyme/VTF to catalyze release of UUUUUNU-containing nascent RNA from the elongation complex. NPH-I must bind ssDNA in order to exhibit ATPase activity. In Heliothis armigera entomopoxvirus (HaEPV), this protein is Nucleoside triphosphatase I (NPH1).